The primary structure comprises 141 residues: Hemoglobin subunit alpha (141 aa).

The Globin domain occupies 1 to 141 (VLSAADKAHV…VSTVLTSKYR (141 aa)). Phosphoserine is present on Ser-3. Residues Lys-7 and Lys-11 each carry the N6-succinyllysine modification. Position 16 is an N6-acetyllysine; alternate (Lys-16). The residue at position 16 (Lys-16) is an N6-succinyllysine; alternate. Tyr-24 carries the phosphotyrosine modification. The residue at position 35 (Ser-35) is a Phosphoserine. Lys-40 is subject to N6-succinyllysine. Phosphoserine is present on Ser-49. His-58 is a binding site for O2. His-87 is a heme b binding site. Thr-108 carries the post-translational modification Phosphothreonine. A Phosphoserine modification is found at Ser-124. Thr-134 and Thr-137 each carry phosphothreonine. The residue at position 138 (Ser-138) is a Phosphoserine.

Belongs to the globin family. Heterotetramer of two alpha chains and two beta chains. In terms of tissue distribution, red blood cells.

In terms of biological role, involved in oxygen transport from the lung to the various peripheral tissues. Its function is as follows. Hemopressin acts as an antagonist peptide of the cannabinoid receptor CNR1. Hemopressin-binding efficiently blocks cannabinoid receptor CNR1 and subsequent signaling. In Bradypus tridactylus (Pale-throated three-toed sloth), this protein is Hemoglobin subunit alpha (HBA).